A 511-amino-acid chain; its full sequence is Coiled-coil domain-containing protein 125 (511 aa).

Polar residues predominate over residues 1–12; sequence MSKVARSSSESD. Residues 1–110 are disordered; the sequence is MSKVARSSSE…TVDSNSELSN (110 aa). Over residues 43-54 the composition is skewed to basic and acidic residues; sequence EFSHRSRKRSDG. Residues 83–108 are compositionally biased toward polar residues; that stretch reads QDTFPQVSRISNYRRQSSTVDSNSEL. Coiled-coil stretches lie at residues 105–243 and 293–325; these read NSEL…LEAL and RMAA…MADA. Ser504 is modified (phosphoserine).

The protein localises to the cytoplasm. Its function is as follows. May be involved in the regulation of cell migration. The polypeptide is Coiled-coil domain-containing protein 125 (CCDC125) (Homo sapiens (Human)).